Consider the following 224-residue polypeptide: MRLTWLGHACFSLAGSRTIVIDPFIPEGSLPAEPDIVAVTHAHADHLGIATELSKKTVAVNEVAKYLKTKGVPAEPMNLGGTITVDGVRFTMTPALHSSWLEDEGPGFYGGVAAGFVITMDGVSVYHAGDTALFSDMQLIRDLYRPDVALLPVGGCFTMGPEEAMIAARYIGAPLVVPMHYDTFPAIRQNLEEFKRTIERTTSIRVALLSPGESIEVGPEKAGE.

This sequence belongs to the UPF0173 family.

This chain is UPF0173 metal-dependent hydrolase Memar_1421, found in Methanoculleus marisnigri (strain ATCC 35101 / DSM 1498 / JR1).